The chain runs to 258 residues: MIQIDALPAFNDNYIWLLQDATSRRCAVVDPGDAKPVEAWLAAHPDWRLSDILVTHHHHDHVGGVAALKELTGARVLGPANEKIPARDLALEDGERVEVLGLVFEIFHVPGHTLGHIAYYHPAETPLLFCGDTLFAAGCGRLFEGTPAQMHHSLARLAALPANTRVYCTHEYTLSNLRFALAVEPDNAALRERFEEATRLRERDRITLPSEISLELSTNPFLRVSEKSVKKKADQRSGQQNRTPEEVFAVLRAWKDQF.

Zn(2+)-binding residues include histidine 56, histidine 58, aspartate 60, histidine 61, histidine 112, aspartate 132, and histidine 170.

Belongs to the metallo-beta-lactamase superfamily. Glyoxalase II family. In terms of assembly, monomer. It depends on Zn(2+) as a cofactor.

The catalysed reaction is an S-(2-hydroxyacyl)glutathione + H2O = a 2-hydroxy carboxylate + glutathione + H(+). It functions in the pathway secondary metabolite metabolism; methylglyoxal degradation; (R)-lactate from methylglyoxal: step 2/2. Its function is as follows. Thiolesterase that catalyzes the hydrolysis of S-D-lactoyl-glutathione to form glutathione and D-lactic acid. The polypeptide is Hydroxyacylglutathione hydrolase (Pseudomonas aeruginosa (strain LESB58)).